The following is a 411-amino-acid chain: Peptidyl-prolyl cis-trans isomerase (411 aa).

Ser-2 carries the N-acetylserine modification. Disordered regions lie at residues 54–127 and 160–302; these read IIKR…TLSP and NYVK…PKSK. Residues 61-87 show a composition bias toward acidic residues; that stretch reads FEDDDFLGGDFDEDEIDEESSEEEEEE. Phosphoserine is present on residues Ser-80 and Ser-81. Thr-89 carries the post-translational modification Phosphothreonine. 2 stretches are compositionally biased toward acidic residues: residues 103–118 and 173–242; these read ESEDDEEDDDEDDEFQ and EGED…EEQK. Phosphotyrosine; by CK2 is present on Tyr-184. Ser-186 is subject to Phosphoserine; by CK2. Residues 251-260 are compositionally biased toward basic residues; it reads KSKKEKKRKH. The short motif at 256–271 is the Nuclear localization signal element; sequence KKRKHEEKEEEKKAKK. Residues 261–296 are compositionally biased toward basic and acidic residues; it reads EEKEEEKKAKKVKKVEFKKDLEEGPTKPKSKKEQDK. The PPIase FKBP-type domain maps to 324–411; it reads GARVGMRYIG…FDVKLVSMKN (88 aa).

The protein belongs to the FKBP-type PPIase family. FKBP3/4 subfamily. In terms of assembly, interacts with NOP53. Phosphorylated at tyrosine and dephosphorylated by the phosphotyrosine-specific phosphoprotein phosphatase PTP1.

It is found in the nucleus. It localises to the nucleolus. The enzyme catalyses [protein]-peptidylproline (omega=180) = [protein]-peptidylproline (omega=0). With respect to regulation, inhibited by both FK506 and rapamycin. Proline isomerase that belongs to an abundant class of enzymes that catalyze the cis-trans isomerization of X-Pro peptide bonds and can accelerate the refolding of proline-containing polypeptides. Specifically binds nuclear localization sequences. May be involved in the assembly or folding of ribosomal proteins. This is Peptidyl-prolyl cis-trans isomerase from Saccharomyces cerevisiae (strain ATCC 204508 / S288c) (Baker's yeast).